Reading from the N-terminus, the 318-residue chain is NADH-ubiquinone oxidoreductase chain 1 (318 aa).

Transmembrane regions (helical) follow at residues 2 to 22 (FMIN…FLTL), 68 to 88 (ISMF…MWTP), 100 to 120 (LGIL…LWSG), 146 to 166 (LAII…PTLI), 171 to 191 (HIWL…STLA), 222 to 242 (LFFL…TILF), 253 to 273 (ELYT…FLWV), and 293 to 313 (FLPL…ITAG).

This sequence belongs to the complex I subunit 1 family. Core subunit of respiratory chain NADH dehydrogenase (Complex I) which is composed of 45 different subunits.

The protein resides in the mitochondrion inner membrane. It catalyses the reaction a ubiquinone + NADH + 5 H(+)(in) = a ubiquinol + NAD(+) + 4 H(+)(out). Core subunit of the mitochondrial membrane respiratory chain NADH dehydrogenase (Complex I) which catalyzes electron transfer from NADH through the respiratory chain, using ubiquinone as an electron acceptor. Essential for the catalytic activity and assembly of complex I. The polypeptide is NADH-ubiquinone oxidoreductase chain 1 (MT-ND1) (Hipposideros armiger terasensis (Formosan leaf-nosed bat)).